We begin with the raw amino-acid sequence, 360 residues long: Peptide chain release factor 1 (360 aa).

N5-methylglutamine is present on glutamine 235. Residues 284–303 (RERQSKEAAERKSLVGSGDR) form a disordered region.

This sequence belongs to the prokaryotic/mitochondrial release factor family. In terms of processing, methylated by PrmC. Methylation increases the termination efficiency of RF1.

The protein resides in the cytoplasm. Functionally, peptide chain release factor 1 directs the termination of translation in response to the peptide chain termination codons UAG and UAA. This chain is Peptide chain release factor 1, found in Bordetella avium (strain 197N).